The primary structure comprises 554 residues: Dihydroxy-acid dehydratase (554 aa).

D78 is a Mg(2+) binding site. C119 lines the [2Fe-2S] cluster pocket. Mg(2+) is bound by residues D120 and K121. At K121 the chain carries N6-carboxylysine. C191 is a binding site for [2Fe-2S] cluster. E442 provides a ligand contact to Mg(2+). S468 (proton acceptor) is an active-site residue.

It belongs to the IlvD/Edd family. In terms of assembly, homodimer. The cofactor is [2Fe-2S] cluster. Requires Mg(2+) as cofactor.

It carries out the reaction (2R)-2,3-dihydroxy-3-methylbutanoate = 3-methyl-2-oxobutanoate + H2O. The enzyme catalyses (2R,3R)-2,3-dihydroxy-3-methylpentanoate = (S)-3-methyl-2-oxopentanoate + H2O. It functions in the pathway amino-acid biosynthesis; L-isoleucine biosynthesis; L-isoleucine from 2-oxobutanoate: step 3/4. Its pathway is amino-acid biosynthesis; L-valine biosynthesis; L-valine from pyruvate: step 3/4. Its function is as follows. Functions in the biosynthesis of branched-chain amino acids. Catalyzes the dehydration of (2R,3R)-2,3-dihydroxy-3-methylpentanoate (2,3-dihydroxy-3-methylvalerate) into 2-oxo-3-methylpentanoate (2-oxo-3-methylvalerate) and of (2R)-2,3-dihydroxy-3-methylbutanoate (2,3-dihydroxyisovalerate) into 2-oxo-3-methylbutanoate (2-oxoisovalerate), the penultimate precursor to L-isoleucine and L-valine, respectively. In Thermotoga petrophila (strain ATCC BAA-488 / DSM 13995 / JCM 10881 / RKU-1), this protein is Dihydroxy-acid dehydratase.